A 629-amino-acid polypeptide reads, in one-letter code: DNA-directed RNA polymerase subunit beta' (629 aa).

The Zn(2+) site is built by C70, C72, C85, and C88. Mg(2+) contacts are provided by D472, D474, and D476.

It belongs to the RNA polymerase beta' chain family. RpoC1 subfamily. In plastids the minimal PEP RNA polymerase catalytic core is composed of four subunits: alpha, beta, beta', and beta''. When a (nuclear-encoded) sigma factor is associated with the core the holoenzyme is formed, which can initiate transcription. Requires Mg(2+) as cofactor. Zn(2+) is required as a cofactor.

Its subcellular location is the plastid. The protein resides in the chloroplast. It carries out the reaction RNA(n) + a ribonucleoside 5'-triphosphate = RNA(n+1) + diphosphate. DNA-dependent RNA polymerase catalyzes the transcription of DNA into RNA using the four ribonucleoside triphosphates as substrates. The sequence is that of DNA-directed RNA polymerase subunit beta' from Pyropia yezoensis (Susabi-nori).